Reading from the N-terminus, the 101-residue chain is A-type ATP synthase subunit F (101 aa).

Belongs to the V-ATPase F subunit family. As to quaternary structure, has multiple subunits with at least A(3), B(3), C, D, E, F, H, I and proteolipid K(x).

The protein resides in the cell membrane. In terms of biological role, component of the A-type ATP synthase that produces ATP from ADP in the presence of a proton gradient across the membrane. The protein is A-type ATP synthase subunit F of Methanosarcina acetivorans (strain ATCC 35395 / DSM 2834 / JCM 12185 / C2A).